A 170-amino-acid chain; its full sequence is Large ribosomal subunit protein uL10 (170 aa).

Belongs to the universal ribosomal protein uL10 family. In terms of assembly, part of the ribosomal stalk of the 50S ribosomal subunit. The N-terminus interacts with L11 and the large rRNA to form the base of the stalk. The C-terminus forms an elongated spine to which L12 dimers bind in a sequential fashion forming a multimeric L10(L12)X complex.

Its function is as follows. Forms part of the ribosomal stalk, playing a central role in the interaction of the ribosome with GTP-bound translation factors. This is Large ribosomal subunit protein uL10 from Lactobacillus helveticus (strain DPC 4571).